Reading from the N-terminus, the 229-residue chain is Cytidylate kinase (229 aa).

An ATP-binding site is contributed by 10-18; it reads GPAGSGKST.

The protein belongs to the cytidylate kinase family. Type 1 subfamily.

It localises to the cytoplasm. The enzyme catalyses CMP + ATP = CDP + ADP. It carries out the reaction dCMP + ATP = dCDP + ADP. The sequence is that of Cytidylate kinase from Leptospira interrogans serogroup Icterohaemorrhagiae serovar Lai (strain 56601).